A 134-amino-acid polypeptide reads, in one-letter code: Small ribosomal subunit protein uS8c (134 aa).

Belongs to the universal ribosomal protein uS8 family. In terms of assembly, part of the 30S ribosomal subunit.

The protein localises to the plastid. Its subcellular location is the chloroplast. Its function is as follows. One of the primary rRNA binding proteins, it binds directly to 16S rRNA central domain where it helps coordinate assembly of the platform of the 30S subunit. The chain is Small ribosomal subunit protein uS8c (rps8) from Cucumis sativus (Cucumber).